The following is an 87-amino-acid chain: Small ribosomal subunit protein bS20 (87 aa).

The segment at 1–24 is disordered; sequence MANTAQARKRARQSVERNKHNSSL.

The protein belongs to the bacterial ribosomal protein bS20 family.

In terms of biological role, binds directly to 16S ribosomal RNA. The chain is Small ribosomal subunit protein bS20 from Bordetella petrii (strain ATCC BAA-461 / DSM 12804 / CCUG 43448).